Consider the following 319-residue polypeptide: MKPENKLPVLDLISAEMKTVVNTLQPDLPPWPATGTIAEQRQYYTLERRFWNVSAPEMATRAYRVPTKYGQVKTRIFYPQPDSPATLFYLHGGGFILGNLDTHDRIMRLLASYSQCTVIGIDYTLSPEARFPQAIEEIVAACCYFHQQAEDYQINMSRIGFAGDSAGAMLALASALWLRDKQIDCGKVAGVLLWYGLYGLRDSVTRRLLGGVWDGLTQQDLQMYEEAYLSNDADRESPYYCLFNNDLTREVPPCFIAGAEFDPLLDDSRLLYQTLAAHQQPCEFKLYPGTLHAFLHYSRMMKTADEALRDGAQFFTAQL.

The short motif at 91–93 is the Involved in the stabilization of the negatively charged intermediate by the formation of the oxyanion hole element; the sequence is HGG. Residues S165, D262, and H292 contribute to the active site.

This sequence belongs to the 'GDXG' lipolytic enzyme family. In terms of assembly, homodimer. Interacts with MalT and MelA.

It is found in the cytoplasm. In terms of biological role, displays esterase activity towards short chain fatty esters (acyl chain length of up to 8 carbons). Able to hydrolyze triacetylglycerol (triacetin) and tributyrylglycerol (tributyrin), but not trioleylglycerol (triolein) or cholesterol oleate. Negatively regulates MalT activity by antagonizing maltotriose binding. Inhibits MelA galactosidase activity. The sequence is that of Acetyl esterase from Escherichia coli O81 (strain ED1a).